Consider the following 124-residue polypeptide: Small ribosomal subunit protein uS12 (124 aa).

The segment at 1–32 (MPTIQQLVRKGRQDKVEKTKTPALKGSPQRRG) is disordered. A compositionally biased stretch (basic and acidic residues) spans 11–20 (GRQDKVEKTK). Position 89 is a 3-methylthioaspartic acid (Asp-89).

Belongs to the universal ribosomal protein uS12 family. As to quaternary structure, part of the 30S ribosomal subunit. Contacts proteins S8 and S17. May interact with IF1 in the 30S initiation complex.

Functionally, with S4 and S5 plays an important role in translational accuracy. Its function is as follows. Interacts with and stabilizes bases of the 16S rRNA that are involved in tRNA selection in the A site and with the mRNA backbone. Located at the interface of the 30S and 50S subunits, it traverses the body of the 30S subunit contacting proteins on the other side and probably holding the rRNA structure together. The combined cluster of proteins S8, S12 and S17 appears to hold together the shoulder and platform of the 30S subunit. The protein is Small ribosomal subunit protein uS12 of Frankia alni (strain DSM 45986 / CECT 9034 / ACN14a).